The chain runs to 362 residues: Peptide chain release factor 1 (362 aa).

Glutamine 237 is modified (N5-methylglutamine).

This sequence belongs to the prokaryotic/mitochondrial release factor family. Post-translationally, methylated by PrmC. Methylation increases the termination efficiency of RF1.

The protein localises to the cytoplasm. In terms of biological role, peptide chain release factor 1 directs the termination of translation in response to the peptide chain termination codons UAG and UAA. This chain is Peptide chain release factor 1, found in Aliivibrio fischeri (strain ATCC 700601 / ES114) (Vibrio fischeri).